We begin with the raw amino-acid sequence, 406 residues long: Arginine biosynthesis bifunctional protein ArgJ (406 aa).

Residues threonine 152, lysine 179, threonine 190, glutamate 277, asparagine 401, and serine 406 each coordinate substrate. Threonine 190 serves as the catalytic Nucleophile.

It belongs to the ArgJ family. As to quaternary structure, heterotetramer of two alpha and two beta chains.

Its subcellular location is the cytoplasm. The catalysed reaction is N(2)-acetyl-L-ornithine + L-glutamate = N-acetyl-L-glutamate + L-ornithine. It catalyses the reaction L-glutamate + acetyl-CoA = N-acetyl-L-glutamate + CoA + H(+). The protein operates within amino-acid biosynthesis; L-arginine biosynthesis; L-ornithine and N-acetyl-L-glutamate from L-glutamate and N(2)-acetyl-L-ornithine (cyclic): step 1/1. Its pathway is amino-acid biosynthesis; L-arginine biosynthesis; N(2)-acetyl-L-ornithine from L-glutamate: step 1/4. Functionally, catalyzes two activities which are involved in the cyclic version of arginine biosynthesis: the synthesis of N-acetylglutamate from glutamate and acetyl-CoA as the acetyl donor, and of ornithine by transacetylation between N(2)-acetylornithine and glutamate. In Neisseria gonorrhoeae, this protein is Arginine biosynthesis bifunctional protein ArgJ.